Reading from the N-terminus, the 465-residue chain is Probable protein phosphatase 2C 71 (465 aa).

Disordered regions lie at residues 14 to 47, 68 to 119, and 133 to 191; these read RPCK…ACRA, RPRD…GEVT, and SGGA…PAEE. A compositionally biased stretch (pro residues) spans 18 to 30; sequence LAPPPPPPLPVSP. 2 stretches are compositionally biased toward low complexity: residues 84 to 106 and 133 to 143; these read AVAP…AAAE and SGGAEATATSG. In terms of domain architecture, PPM-type phosphatase spans 222 to 460; sequence ASGAAILPHP…DDIAVVVSIV (239 aa). Positions 254, 255, 384, and 451 each coordinate Mn(2+).

This sequence belongs to the PP2C family. Mg(2+) serves as cofactor. Mn(2+) is required as a cofactor.

It catalyses the reaction O-phospho-L-seryl-[protein] + H2O = L-seryl-[protein] + phosphate. The enzyme catalyses O-phospho-L-threonyl-[protein] + H2O = L-threonyl-[protein] + phosphate. The sequence is that of Probable protein phosphatase 2C 71 from Oryza sativa subsp. japonica (Rice).